Consider the following 752-residue polypeptide: Maltodextrin phosphorylase (752 aa).

Lys603 carries the post-translational modification N6-(pyridoxal phosphate)lysine.

This sequence belongs to the glycogen phosphorylase family. The cofactor is pyridoxal 5'-phosphate.

The enzyme catalyses [(1-&gt;4)-alpha-D-glucosyl](n) + phosphate = [(1-&gt;4)-alpha-D-glucosyl](n-1) + alpha-D-glucose 1-phosphate. Its function is as follows. Phosphorylase is an important allosteric enzyme in carbohydrate metabolism. Enzymes from different sources differ in their regulatory mechanisms and in their natural substrates. However, all known phosphorylases share catalytic and structural properties. The protein is Maltodextrin phosphorylase (malP) of Streptococcus pneumoniae serotype 4 (strain ATCC BAA-334 / TIGR4).